A 277-amino-acid polypeptide reads, in one-letter code: Pristinamycin IIA synthase subunit B (277 aa).

In terms of assembly, heterodimer of two subunits, SnaA and SnaB. Requires FMN as cofactor.

Catalyzes the oxidation of the proline residue of pristinamycin IIB (PIIB) to pristinamycin IIA (PIIA). The polypeptide is Pristinamycin IIA synthase subunit B (snaB) (Streptomyces pristinaespiralis).